We begin with the raw amino-acid sequence, 137 residues long: 15.7 kDa heat shock protein, peroxisomal (137 aa).

A sHSP domain is found at 15-134 (QEWSRSTALI…SSKVRNVNIT (120 aa)). A Microbody targeting signal motif is present at residues 135–137 (SKL).

The protein belongs to the small heat shock protein (HSP20) family. May form oligomeric structures.

Its subcellular location is the peroxisome. Functionally, possesses chaperone activity. This is 15.7 kDa heat shock protein, peroxisomal (HSP15.7) from Arabidopsis thaliana (Mouse-ear cress).